Consider the following 430-residue polypeptide: Putative golgin subfamily A member 8D (430 aa).

The stretch at 2 to 217 (EWKLEQSMRE…LTAQLSLMAL (216 aa)) forms a coiled coil. 4 disordered regions span residues 138-158 (LREQ…QEER), 217-239 (LPGE…RPMP), 290-331 (PITK…GVAA), and 382-406 (PVQG…QDHQ). Over residues 222 to 235 (HGGEHLDSEGEEAP) the composition is skewed to basic and acidic residues. Gly residues predominate over residues 303–316 (PGGGHHQAGPGQGG).

This sequence belongs to the GOLGA8 family.

The sequence is that of Putative golgin subfamily A member 8D (GOLGA8DP) from Homo sapiens (Human).